Here is a 339-residue protein sequence, read N- to C-terminus: Protein RecA (339 aa).

74–81 (GPESSGKT) provides a ligand contact to ATP.

This sequence belongs to the RecA family.

It is found in the cytoplasm. In terms of biological role, can catalyze the hydrolysis of ATP in the presence of single-stranded DNA, the ATP-dependent uptake of single-stranded DNA by duplex DNA, and the ATP-dependent hybridization of homologous single-stranded DNAs. It interacts with LexA causing its activation and leading to its autocatalytic cleavage. The protein is Protein RecA of Phytoplasma mali (strain AT).